A 554-amino-acid polypeptide reads, in one-letter code: Formate--tetrahydrofolate ligase (554 aa).

ATP is bound at residue 65-72; the sequence is TPLGEGKT.

This sequence belongs to the formate--tetrahydrofolate ligase family.

It carries out the reaction (6S)-5,6,7,8-tetrahydrofolate + formate + ATP = (6R)-10-formyltetrahydrofolate + ADP + phosphate. Its pathway is one-carbon metabolism; tetrahydrofolate interconversion. This Aliivibrio salmonicida (strain LFI1238) (Vibrio salmonicida (strain LFI1238)) protein is Formate--tetrahydrofolate ligase.